The primary structure comprises 92 residues: Small ribosomal subunit protein uS19c (92 aa).

It belongs to the universal ribosomal protein uS19 family.

Its subcellular location is the plastid. It is found in the chloroplast. In terms of biological role, protein S19 forms a complex with S13 that binds strongly to the 16S ribosomal RNA. This chain is Small ribosomal subunit protein uS19c, found in Gossypium barbadense (Sea Island cotton).